The primary structure comprises 297 residues: Homoserine kinase (297 aa).

ATP is bound at residue 85 to 95; that stretch reads PPTRGMGSSSA.

It belongs to the GHMP kinase family. Homoserine kinase subfamily.

It localises to the cytoplasm. It catalyses the reaction L-homoserine + ATP = O-phospho-L-homoserine + ADP + H(+). Its pathway is amino-acid biosynthesis; L-threonine biosynthesis; L-threonine from L-aspartate: step 4/5. Functionally, catalyzes the ATP-dependent phosphorylation of L-homoserine to L-homoserine phosphate. This chain is Homoserine kinase, found in Desulfitobacterium hafniense (strain DSM 10664 / DCB-2).